A 303-amino-acid chain; its full sequence is Eukaryotic translation initiation factor 3 subunit G (303 aa).

A disordered region spans residues 1 to 38; that stretch reads MATQTKHDWADDEDLEETTTTTAPTTDLPPPQKIQNKD. The RRM domain maps to 223–301; sequence ATLRVTNVSE…LILRVEFAKK (79 aa).

The protein belongs to the eIF-3 subunit G family. As to quaternary structure, component of the eukaryotic translation initiation factor 3 (eIF-3) complex.

Its subcellular location is the cytoplasm. Its function is as follows. RNA-binding component of the eukaryotic translation initiation factor 3 (eIF-3) complex, which is involved in protein synthesis of a specialized repertoire of mRNAs and, together with other initiation factors, stimulates binding of mRNA and methionyl-tRNAi to the 40S ribosome. The eIF-3 complex specifically targets and initiates translation of a subset of mRNAs involved in cell proliferation. This subunit can bind 18S rRNA. This chain is Eukaryotic translation initiation factor 3 subunit G, found in Chaetomium globosum (strain ATCC 6205 / CBS 148.51 / DSM 1962 / NBRC 6347 / NRRL 1970) (Soil fungus).